The primary structure comprises 934 residues: Progesterone receptor (934 aa).

Residues 1 to 49 (MTELKSKGPRAPHVAGGPPSPEVGSPLLCRPAAGPFQGSQTSDTLPEVS) are disordered. The AF3; mediates transcriptional activation stretch occupies residues 1 to 164 (MTELKSKGPR…PATQRVLSPL (164 aa)). Positions 1-567 (MTELKSKGPR…YSFESLPQKI (567 aa)) are modulating, Pro-Rich. The residue at position 20 (Ser-20) is a Phosphoserine. The LXXL motif 1 signature appears at 55–59 (LDGLL). Residues 61–239 (PRLCQGQDPP…EDSAGPLLKG (179 aa)) form a disordered region. The residue at position 81 (Ser-81) is a Phosphoserine. The LXXL motif 2 motif lies at 115–119 (LDTLL). 2 positions are modified to phosphoserine: Ser-130 and Ser-162. The segment at 165-305 (MSRSGGKTED…LATTMMDFIH (141 aa)) is mediates transcriptional transrepression. The Nuclear localization signal motif lies at 183–187 (KVLPR). Ser-190 is subject to Phosphoserine. Polar residues predominate over residues 191–203 (PSRQLLLPTSGSP). Position 213 is a phosphoserine (Ser-213). A compositionally biased stretch (acidic residues) spans 220 to 231 (EVEEEDGSESED). Ser-294 is subject to Phosphoserine; by MAPK1. Residues 331 to 375 (GGAGAASAFAPPQSSPSASSTPVAVGDFPDCAYPPDAEPKDNAYP) form a disordered region. Residues 335–350 (AASAFAPPQSSPSASS) are compositionally biased toward low complexity. Ser-345 carries the post-translational modification Phosphoserine; by MAPK. Residue Lys-388 forms a Glycyl lysine isopeptide (Lys-Gly) (interchain with G-Cter in SUMO); alternate linkage. Lys-388 is covalently cross-linked (Glycyl lysine isopeptide (Lys-Gly) (interchain with G-Cter in ubiquitin); alternate). The residue at position 400 (Ser-400) is a Phosphoserine; by CDK2. The tract at residues 415–454 (PDFPLGPPPQLPPRAPPSRPGEAAVTAAPASASVSSASSP) is disordered. Positions 418–433 (PLGPPPQLPPRAPPSR) are enriched in pro residues. Low complexity predominate over residues 434-454 (PGEAAVTAAPASASVSSASSP). The interval 456–547 (STLECILYKA…VYPPYLNYLR (92 aa)) is AF1; mediates transcriptional activation. Lys-532 participates in a covalent cross-link: Glycyl lysine isopeptide (Lys-Gly) (interchain with G-Cter in SUMO). 2 NR C4-type zinc fingers span residues 568–588 (CLIC…CGSC) and 604–628 (CAGR…LRKC). Residues 568–640 (CLICGDEASG…AGMVLGGRKF (73 aa)) constitute a DNA-binding region (nuclear receptor). Ser-677 carries the phosphoserine modification. An NR LBD domain is found at 680–914 (QDIQLIPPLI…EFPEMMSEVI (235 aa)). Positions 688–934 (LIKLLMSIEP…MVKPLLFHKK (247 aa)) are AF2; mediates transcriptional activation. Arg-767 provides a ligand contact to progesterone.

It belongs to the nuclear hormone receptor family. In terms of assembly, interacts with SMARD1 and UNC45A. Interacts with CUEDC2; the interaction promotes ubiquitination, decreases sumoylation, and represses transcriptional activity. Interacts with PIAS3; the interaction promotes sumoylation of PR in a hormone-dependent manner, inhibits DNA-binding, and alters nuclear export. Interacts with SP1; the interaction requires ligand-induced phosphorylation on Ser-345 by ERK1/2-MAPK. Interacts with PRMT2. Interacts with NCOA2 and NCOA1. Interacts with KLF9. Interacts with GTF2B. In terms of processing, phosphorylated on multiple serine sites. Several of these sites are hormone-dependent. Phosphorylation on Ser-294 is highly hormone-dependent and modulates ubiquitination and sumoylation on Lys-388. Phosphorylation on Ser-345 also requires induction by hormone. Basal phosphorylation on Ser-81, Ser-162, Ser-190 and Ser-400 is increased in response to progesterone and can be phosphorylated in vitro by the CDK2-A1 complex. Increased levels of phosphorylation on Ser-400 also in the presence of EGF, heregulin, IGF, PMA and FBS. Phosphorylation at this site by CDK2 is ligand-independent, and increases nuclear translocation and transcriptional activity. Phosphorylation at Ser-162 and Ser-294, but not at Ser-190, is impaired during the G(2)/M phase of the cell cycle. Phosphorylation on Ser-345 by ERK1/2 MAPK is required for interaction with SP1. Sumoylation is hormone-dependent and represses transcriptional activity. Sumoylation on all three sites is enhanced by PIAS3. Desumoylated by SENP1. Sumoylation on Lys-388, the main site of sumoylation, is repressed by ubiquitination on the same site, and modulated by phosphorylation at Ser-294. Post-translationally, ubiquitination is hormone-dependent and represses sumoylation on the same site. Promoted by MAPK-mediated phosphorylation on Ser-294. Ubiquitinated by UBR5, leading to its degradation: UBR5 specifically recognizes and binds ligand-bound PGR when it is not associated with coactivators (NCOAs). In presence of NCOAs, the UBR5-degron is not accessible, preventing its ubiquitination and degradation. In terms of processing, palmitoylated by ZDHHC7 and ZDHHC21. Palmitoylation is required for plasma membrane targeting and for rapid intracellular signaling via ERK and AKT kinases and cAMP generation.

Its subcellular location is the nucleus. It is found in the cytoplasm. Functionally, the steroid hormones and their receptors are involved in the regulation of eukaryotic gene expression and affect cellular proliferation and differentiation in target tissues. Transcriptional activator of several progesteron-dependent promoters in a variety of cell types. Involved in activation of SRC-dependent MAPK signaling on hormone stimulation. This Colobus guereza (Mantled guereza) protein is Progesterone receptor (PGR).